Reading from the N-terminus, the 490-residue chain is DNA-binding protein D-ETS-3 (490 aa).

2 disordered regions span residues threonine 190–glycine 255 and serine 271–arginine 294. The span at histidine 196–threonine 207 shows a compositional bias: basic and acidic residues. A compositionally biased stretch (low complexity) spans alanine 211–serine 227. The segment covering glycine 244 to glycine 255 has biased composition (gly residues). The span at serine 271–serine 280 shows a compositional bias: low complexity. Positions isoleucine 317 to aspartate 397 form a DNA-binding region, ETS.

This sequence belongs to the ETS family. Embryonic ventral nervous system, higher in the thoracic than abdominal segments.

Its subcellular location is the nucleus. In Drosophila melanogaster (Fruit fly), this protein is DNA-binding protein D-ETS-3 (Ets65A).